A 122-amino-acid polypeptide reads, in one-letter code: uncharacterized protein (122 aa).

It is found in the mitochondrion. This is an uncharacterized protein from Arabidopsis thaliana (Mouse-ear cress).